Here is a 353-residue protein sequence, read N- to C-terminus: tRNA-specific 2-thiouridylase MnmA (353 aa).

ATP-binding positions include 6 to 13 and L32; that span reads GMSGGVDS. C99 functions as the Nucleophile in the catalytic mechanism. Residues C99 and C197 are joined by a disulfide bond. G124 is a binding site for ATP. The segment at 147 to 149 is interaction with tRNA; sequence KDQ. The active-site Cysteine persulfide intermediate is the C197. The segment at 303 to 304 is interaction with tRNA; that stretch reads RY.

It belongs to the MnmA/TRMU family.

The protein localises to the cytoplasm. The enzyme catalyses S-sulfanyl-L-cysteinyl-[protein] + uridine(34) in tRNA + AH2 + ATP = 2-thiouridine(34) in tRNA + L-cysteinyl-[protein] + A + AMP + diphosphate + H(+). Its function is as follows. Catalyzes the 2-thiolation of uridine at the wobble position (U34) of tRNA, leading to the formation of s(2)U34. This chain is tRNA-specific 2-thiouridylase MnmA, found in Persephonella marina (strain DSM 14350 / EX-H1).